The primary structure comprises 473 residues: MSEERHEDHHRDVENKLNLNGKDDINGNTSISIEVPDGGYGWFILLAFILYNFSTWGANSGYAIYLAHYLENNTFAGGSKLDYASIGGLAFSCGLFFAPVITWLYHIFSIQFIIGLGILFQGAALLLAAFSVTLWEIYLTQGVLIGFGLAFIFIPSVTLIPLWFRNKRSLASGIGTAGSGLGGIVFNLGMQSILQKRGVKWALIAQCIICTSLSTIALMLTRTTHQGLRQHKRSYKFELLDYDVLSNFAVWLLFGFVSFAMLGYVVLLYSLSDFTVSLGYTSKQGSYVSCMVSVGSLLGRPIVGHIADKYGSLTVGMILHLVMAILCWAMWIPCKNLATAIAFGLLVGSIMGTIWPTIASIVTRIVGLQKLPGTFGSTWIFMAAFALVAPIIGLELRSTDTNGNDYYRTAIFVGFAYFGVSLCQWLLRGFIIARDEIAVREAYSADQNELHLNVKLSHMSKCLFRYKQLPRRV.

Over 1–37 the chain is Cytoplasmic; sequence MSEERHEDHHRDVENKLNLNGKDDINGNTSISIEVPD. A helical transmembrane segment spans residues 38–58; sequence GGYGWFILLAFILYNFSTWGA. The Extracellular portion of the chain corresponds to 59-83; the sequence is NSGYAIYLAHYLENNTFAGGSKLDY. A glycan (N-linked (GlcNAc...) asparagine) is linked at asparagine 72. Residues 84 to 105 traverse the membrane as a helical segment; sequence ASIGGLAFSCGLFFAPVITWLY. The Cytoplasmic portion of the chain corresponds to 106-111; the sequence is HIFSIQ. A helical transmembrane segment spans residues 112–135; the sequence is FIIGLGILFQGAALLLAAFSVTLW. Residues 136–141 lie on the Extracellular side of the membrane; that stretch reads EIYLTQ. The chain crosses the membrane as a helical span at residues 142–163; the sequence is GVLIGFGLAFIFIPSVTLIPLW. At 164–169 the chain is on the cytoplasmic side; that stretch reads FRNKRS. A helical transmembrane segment spans residues 170-186; that stretch reads LASGIGTAGSGLGGIVF. The Extracellular portion of the chain corresponds to 187–200; that stretch reads NLGMQSILQKRGVK. A helical transmembrane segment spans residues 201–220; that stretch reads WALIAQCIICTSLSTIALML. Over 221 to 243 the chain is Cytoplasmic; the sequence is TRTTHQGLRQHKRSYKFELLDYD. The chain crosses the membrane as a helical span at residues 244-268; it reads VLSNFAVWLLFGFVSFAMLGYVVLL. Topologically, residues 269–286 are extracellular; the sequence is YSLSDFTVSLGYTSKQGS. A helical membrane pass occupies residues 287–304; that stretch reads YVSCMVSVGSLLGRPIVG. Over 305-312 the chain is Cytoplasmic; the sequence is HIADKYGS. A helical transmembrane segment spans residues 313 to 332; that stretch reads LTVGMILHLVMAILCWAMWI. The Extracellular segment spans residues 333-342; it reads PCKNLATAIA. A helical membrane pass occupies residues 343–362; the sequence is FGLLVGSIMGTIWPTIASIV. At 363–370 the chain is on the cytoplasmic side; that stretch reads TRIVGLQK. A helical membrane pass occupies residues 371–394; it reads LPGTFGSTWIFMAAFALVAPIIGL. Topologically, residues 395 to 408 are extracellular; sequence ELRSTDTNGNDYYR. Residues 409–433 form a helical membrane-spanning segment; that stretch reads TAIFVGFAYFGVSLCQWLLRGFIIA. Residues 434–473 lie on the Cytoplasmic side of the membrane; that stretch reads RDEIAVREAYSADQNELHLNVKLSHMSKCLFRYKQLPRRV.

Belongs to the major facilitator superfamily. Monocarboxylate porter (TC 2.A.1.13) family.

It is found in the membrane. Probable transporter. Does not act in the transport of monocarboxylic acids across the plasma membrane. The chain is Probable transporter MCH2 (MCH2) from Saccharomyces cerevisiae (strain ATCC 204508 / S288c) (Baker's yeast).